Reading from the N-terminus, the 4857-residue chain is Dual E2 ubiquitin-conjugating enzyme/E3 ubiquitin-protein ligase BIRC6 (4857 aa).

WD repeat units follow at residues 68-106 (DGLH…QASA) and 107-136 (LSAK…AVGC). One copy of the BIR repeat lies at 268–377 (PELGVGPGRS…LSVTLATSPA (110 aa)). Positions 328, 331, 348, and 355 each coordinate Zn(2+). Residues 379–426 (FPCTDGTDRISCFGSGSCPHFLAAATKRGKICIWDVSKLMKVHLKFEI) form a WD 3 repeat. Disordered regions lie at residues 465–498 (DIPK…TSQK) and 579–618 (ATSP…NSEL). Residues 472-482 (DSDDLLEDSDS) show a composition bias toward acidic residues. Phosphoserine occurs at positions 473, 480, 482, 581, and 590. WD repeat units follow at residues 501 to 720 (MEVS…VQCL), 730 to 850 (NLCI…QHIK), 851 to 927 (DPQD…AKVE), and 928 to 966 (PPKK…FLQI). Polar residues predominate over residues 579–588 (ATSPISSNSH). Over residues 595 to 618 (SRTQGESISEQGSTDNESCTNSEL) the composition is skewed to polar residues. Disordered regions lie at residues 984–1004 (LSKG…PSSP) and 1053–1073 (QQQR…AAQH). The span at 992 to 1004 (SEGSKPLSNPSSP) shows a compositional bias: polar residues. Over residues 1056 to 1065 (RRHPQHLHQQ) the composition is skewed to basic residues. Thr-1710 is modified (phosphothreonine). Residues Ser-2222 and Ser-2955 each carry the phosphoserine modification. The disordered stretch occupies residues 2945–2973 (SVTTNTTDSVSDEEKVSGGKDGNGSSTSV). Residues 3189-3193 (HRRAR) are HRRAR loop; important for DIABLO/SMAC and HTRA2 binding. Residues 3819–4068 (DEKVTMFLQS…ESLLETCPIQ (250 aa)) enclose the Ubiquitin-like domain. Residues 3923-3949 (QSKRAVSATPPRPPSRRGRTIPDKIGS) form a disordered region. Phosphothreonine is present on Thr-3931. Residue Ser-4023 is modified to Phosphoserine. The disordered stretch occupies residues 4260–4283 (RVPNSSVNQTEPQVSSSHNPTSTE). Polar residues predominate over residues 4261-4283 (VPNSSVNQTEPQVSSSHNPTSTE). Positions 4573–4740 (ARARRLAQEA…IRQATVKWAM (168 aa)) constitute a UBC core domain. Cys-4666 (glycyl thioester intermediate) is an active-site residue. The disordered stretch occupies residues 4835 to 4857 (EETLMHDQVKPSSSKELPSDFQL). The span at 4844 to 4857 (KPSSSKELPSDFQL) shows a compositional bias: polar residues.

Belongs to the BIRC6 family. Homodimer; antiparallel. Interacts with RNF41. Interacts with DIABLO/SMAC, likely with higher affinity to SMAC dimer than SMAC monomer; this interaction blocks the substrate-binding site and inhibits the caspase inhibition activity of BIRC6. Interacts with KIF23/MKLP1, USP8/UBPY, BIRC5/survivin, MAP2K1/MEK1, RAB8A/RAB8, RAB11A/RAB11, PLK1, EXOC3/SEC6 and EXOC4/SEC8. Post-translationally, ubiquitinated; mediated by RNF41 E3 ligase and leads to proteasomal degradation, impairing inhibition of apoptosis. Deubiquitinated by USP8/UBPY. Autoubiquitinated; mediated by E1 ubiquitin activating enzyme UBA6. In terms of processing, proteolytically cleaved. Acts as substrate for CASP3, CASP6, CASP7, CASP9 and HTRA2. In terms of tissue distribution, expressed in brain cancer cells.

It is found in the golgi apparatus. Its subcellular location is the trans-Golgi network membrane. The protein resides in the endosome. The protein localises to the cytoplasm. It localises to the cytoskeleton. It is found in the spindle pole. Its subcellular location is the microtubule organizing center. The protein resides in the centrosome. The protein localises to the midbody. It localises to the midbody ring. The catalysed reaction is S-ubiquitinyl-[E1 ubiquitin-activating enzyme]-L-cysteine + [acceptor protein]-L-lysine = [E1 ubiquitin-activating enzyme]-L-cysteine + N(6)-monoubiquitinyl-[acceptor protein]-L-lysine.. With respect to regulation, inhibited by DIABLO/SMAC, which competes for the substrate-binding sites on BIRC6. BIRC6 inhibits caspases and protease by ubiquitination but BIRC6 itself is subjected to protease cleavage by CASP3, CASP6, CASP7, CASP9 and HTRA2 by protease cleavage. Its function is as follows. Anti-apoptotic protein known as inhibitor of apoptosis (IAP) which can regulate cell death by controlling caspases and by acting as an E3 ubiquitin-protein ligase. Unlike most IAPs, does not contain a RING domain and it is not a RING-type E3 ligase. Instead acts as a dual E2/E3 enzyme that combines ubiquitin conjugating (E2) and ubiquitin ligase (E3) activities in a single polypeptide. Ubiquitination is mediated by a non-canonical E1 ubiquitin activating enzyme UBA6. Ubiquitinates CASP3, CASP7 and CASP9 and inhibits their caspase activity; also ubiquitinates their procaspases but to a weaker extent. Ubiquitinates pro-apoptotic factors DIABLO/SMAC and HTRA2. DIABLO/SMAC antagonizes the caspase inhibition activity of BIRC6 by competing for the same binding sites as the caspases. Ubiquitinates the autophagy protein MAP1LC3B; this activity is also inhibited by DIABLO/SMAC. Important regulator for the final stages of cytokinesis. Crucial for normal vesicle targeting to the site of abscission, but also for the integrity of the midbody and the midbody ring, and its striking ubiquitin modification. This Homo sapiens (Human) protein is Dual E2 ubiquitin-conjugating enzyme/E3 ubiquitin-protein ligase BIRC6 (BIRC6).